Here is a 354-residue protein sequence, read N- to C-terminus: 3-isopropylmalate dehydrogenase (354 aa).

Residues Arg-96, Arg-106, Arg-132, and Asp-223 each contribute to the substrate site. Residues Asp-223, Asp-247, and Asp-251 each contribute to the Mg(2+) site. NAD(+) is bound at residue 283–295 (GSAPDIAGQGKAD).

This sequence belongs to the isocitrate and isopropylmalate dehydrogenases family. LeuB type 2 subfamily. As to quaternary structure, homodimer. Mg(2+) is required as a cofactor. It depends on Mn(2+) as a cofactor.

Its subcellular location is the cytoplasm. It carries out the reaction (2R,3S)-3-isopropylmalate + NAD(+) = 4-methyl-2-oxopentanoate + CO2 + NADH. It functions in the pathway amino-acid biosynthesis; L-leucine biosynthesis; L-leucine from 3-methyl-2-oxobutanoate: step 3/4. Catalyzes the oxidation of 3-carboxy-2-hydroxy-4-methylpentanoate (3-isopropylmalate) to 3-carboxy-4-methyl-2-oxopentanoate. The product decarboxylates to 4-methyl-2 oxopentanoate. This is 3-isopropylmalate dehydrogenase from Thermobifida fusca (strain YX).